A 503-amino-acid chain; its full sequence is Glycerol kinase (503 aa).

Position 14 (threonine 14) interacts with ADP. Residues threonine 14, threonine 15, and serine 16 each contribute to the ATP site. Threonine 14 lines the sn-glycerol 3-phosphate pocket. Arginine 18 is an ADP binding site. Positions 84, 85, 136, and 246 each coordinate sn-glycerol 3-phosphate. Glycerol-binding residues include arginine 84, glutamate 85, tyrosine 136, aspartate 246, and glutamine 247. Residues threonine 268 and glycine 311 each contribute to the ADP site. ATP-binding residues include threonine 268, glycine 311, glutamine 315, and glycine 412. ADP contacts are provided by glycine 412 and asparagine 416.

It belongs to the FGGY kinase family.

The catalysed reaction is glycerol + ATP = sn-glycerol 3-phosphate + ADP + H(+). It functions in the pathway polyol metabolism; glycerol degradation via glycerol kinase pathway; sn-glycerol 3-phosphate from glycerol: step 1/1. With respect to regulation, inhibited by fructose 1,6-bisphosphate (FBP). Functionally, key enzyme in the regulation of glycerol uptake and metabolism. Catalyzes the phosphorylation of glycerol to yield sn-glycerol 3-phosphate. In Haemophilus influenzae (strain PittEE), this protein is Glycerol kinase.